A 461-amino-acid chain; its full sequence is Glycine--tRNA ligase (461 aa).

Arg100 and Glu163 together coordinate substrate. Residues 195-197 (RNE), 205-210 (FRTREF), 282-283 (EL), and 326-329 (GLGR) each bind ATP. Position 210–214 (210–214 (FEQME)) interacts with substrate. Position 322–326 (322–326 (EPAAG)) interacts with substrate.

It belongs to the class-II aminoacyl-tRNA synthetase family. As to quaternary structure, homodimer.

The protein resides in the cytoplasm. It carries out the reaction tRNA(Gly) + glycine + ATP = glycyl-tRNA(Gly) + AMP + diphosphate. In terms of biological role, catalyzes the attachment of glycine to tRNA(Gly). The sequence is that of Glycine--tRNA ligase from Corynebacterium efficiens (strain DSM 44549 / YS-314 / AJ 12310 / JCM 11189 / NBRC 100395).